The chain runs to 207 residues: Chloramphenicol acetyltransferase (207 aa).

The active-site Proton acceptor is the His186.

The protein belongs to the chloramphenicol acetyltransferase family. As to quaternary structure, homotrimer.

The catalysed reaction is chloramphenicol + acetyl-CoA = chloramphenicol 3-acetate + CoA. In terms of biological role, this enzyme is an effector of chloramphenicol resistance in bacteria. The chain is Chloramphenicol acetyltransferase (catP) from Clostridium perfringens.